A 216-amino-acid polypeptide reads, in one-letter code: Molybdenum cofactor guanylyltransferase (216 aa).

GTP-binding positions include 16–18, Lys28, Asn57, Asp73, and Asp108; that span reads LAG. Asp108 contacts Mg(2+).

The protein belongs to the MobA family. Monomer. Mg(2+) is required as a cofactor.

The protein localises to the cytoplasm. The enzyme catalyses Mo-molybdopterin + GTP + H(+) = Mo-molybdopterin guanine dinucleotide + diphosphate. Transfers a GMP moiety from GTP to Mo-molybdopterin (Mo-MPT) cofactor (Moco or molybdenum cofactor) to form Mo-molybdopterin guanine dinucleotide (Mo-MGD) cofactor. The chain is Molybdenum cofactor guanylyltransferase from Rhizobium rhizogenes (strain K84 / ATCC BAA-868) (Agrobacterium radiobacter).